The chain runs to 457 residues: tRNA modification GTPase MnmE (457 aa).

(6S)-5-formyl-5,6,7,8-tetrahydrofolate-binding residues include Arg-23, Glu-85, and Arg-124. The TrmE-type G domain maps to 220 to 376 (GALVVLAGQV…LVTAIRAAVL (157 aa)). Asn-230 provides a ligand contact to K(+). Residues 230 to 235 (NAGKSS), 249 to 255 (TDLPGTT), and 274 to 277 (DTAG) contribute to the GTP site. Residue Ser-234 coordinates Mg(2+). K(+) is bound by residues Thr-249, Leu-251, and Thr-254. Thr-255 contributes to the Mg(2+) binding site. Lys-457 contributes to the (6S)-5-formyl-5,6,7,8-tetrahydrofolate binding site.

This sequence belongs to the TRAFAC class TrmE-Era-EngA-EngB-Septin-like GTPase superfamily. TrmE GTPase family. Homodimer. Heterotetramer of two MnmE and two MnmG subunits. Requires K(+) as cofactor.

It localises to the cytoplasm. Functionally, exhibits a very high intrinsic GTPase hydrolysis rate. Involved in the addition of a carboxymethylaminomethyl (cmnm) group at the wobble position (U34) of certain tRNAs, forming tRNA-cmnm(5)s(2)U34. This is tRNA modification GTPase MnmE from Nitratidesulfovibrio vulgaris (strain DP4) (Desulfovibrio vulgaris).